Consider the following 384-residue polypeptide: Oxoeicosanoid receptor 1 (384 aa).

A disordered region spans residues 1 to 21; it reads MELHNLSSPSPSLSSSVLPPS. Residues 1-58 are Extracellular-facing; that stretch reads MELHNLSSPSPSLSSSVLPPSFSPSPSSAPSAFTTVGGSSGGPCHPTSSSLVSAFLAP. An N-linked (GlcNAc...) asparagine glycan is attached at Asn-5. Low complexity predominate over residues 7–21; sequence SSPSPSLSSSVLPPS. Residues 59 to 79 traverse the membrane as a helical segment; it reads ILALEFVLGLVGNSLALFIFC. The Cytoplasmic segment spans residues 80-87; the sequence is IHTRPWTS. The chain crosses the membrane as a helical span at residues 88-108; that stretch reads NTVFLVSLVAADFLLISNLPL. At 109–129 the chain is on the extracellular side; the sequence is RVDYYLLHETWRFGAAACKVN. The cysteines at positions 126 and 198 are disulfide-linked. The helical transmembrane segment at 130–152 threads the bilayer; that stretch reads LFMLSTNRTASVVFLTAIALNRY. Residues 153–172 lie on the Cytoplasmic side of the membrane; that stretch reads LKVVQPHHVLSRASVGAAAR. The chain crosses the membrane as a helical span at residues 173–193; sequence VAGGLWVGILLLNGHLLLSTF. At 194–215 the chain is on the extracellular side; that stretch reads SGPSCLSYRVGTKPSASLRWHQ. Residues 216–236 form a helical membrane-spanning segment; the sequence is ALYLLEFFLPLALILFAIVSI. Over 237-256 the chain is Cytoplasmic; that stretch reads GLTIRNRGLGGQAGPQRAMR. A helical transmembrane segment spans residues 257 to 277; that stretch reads VLAMVVAVYTICFLPSIIFGM. The Extracellular segment spans residues 278–297; it reads ASMVAFWLSACRSLDLCTQL. A helical transmembrane segment spans residues 298 to 318; that stretch reads FHGSLAFTYLNSVLDPVLYCF. The Cytoplasmic portion of the chain corresponds to 319-384; it reads SSPNFLHQSR…SLEKEGSSQG (66 aa).

The protein belongs to the G-protein coupled receptor 1 family. As to expression, expressed in various tissues except brain. Expression is more intense in liver, kidney, peripheral leukocyte, lung, and spleen than in other tissues. Highly expressed in eosinophils, neutrophils, and lung macrophages.

It is found in the membrane. Its function is as follows. Receptor for eicosanoids and polyunsaturated fatty acids such as 5-oxo-6E,8Z,11Z,14Z-eicosatetraenoic acid (5-OXO-ETE), 5(S)-hydroperoxy-6E,8Z,11Z,14Z-eicosatetraenoic acid (5(S)-HPETE) and arachidonic acid. Seems to be coupled to the G(i)/G(o), families of heteromeric G proteins. This is Oxoeicosanoid receptor 1 (OXER1) from Homo sapiens (Human).